The following is a 364-amino-acid chain: DNA polymerase processivity factor (364 aa).

Disordered stretches follow at residues 1–24, 284–306, and 325–364; these read MDRS…KEPP, DDPK…KVEE, and VPTK…RCGM.

The protein belongs to the herpesviridae polymerase accessory protein family.

In terms of biological role, accessory subunit of the DNA polymerase that acts to increase the processivity of polymerization. The sequence is that of DNA polymerase processivity factor (U27) from Homo sapiens (Human).